We begin with the raw amino-acid sequence, 155 residues long: SsrA-binding protein (155 aa).

The tract at residues 135 to 155 (KRQDIKQRDVERETRREIMRH) is disordered.

Belongs to the SmpB family.

Its subcellular location is the cytoplasm. Required for rescue of stalled ribosomes mediated by trans-translation. Binds to transfer-messenger RNA (tmRNA), required for stable association of tmRNA with ribosomes. tmRNA and SmpB together mimic tRNA shape, replacing the anticodon stem-loop with SmpB. tmRNA is encoded by the ssrA gene; the 2 termini fold to resemble tRNA(Ala) and it encodes a 'tag peptide', a short internal open reading frame. During trans-translation Ala-aminoacylated tmRNA acts like a tRNA, entering the A-site of stalled ribosomes, displacing the stalled mRNA. The ribosome then switches to translate the ORF on the tmRNA; the nascent peptide is terminated with the 'tag peptide' encoded by the tmRNA and targeted for degradation. The ribosome is freed to recommence translation, which seems to be the essential function of trans-translation. The chain is SsrA-binding protein from Oleidesulfovibrio alaskensis (strain ATCC BAA-1058 / DSM 17464 / G20) (Desulfovibrio alaskensis).